A 426-amino-acid polypeptide reads, in one-letter code: Glutamate-1-semialdehyde 2,1-aminomutase (426 aa).

An N6-(pyridoxal phosphate)lysine modification is found at Lys265.

Belongs to the class-III pyridoxal-phosphate-dependent aminotransferase family. HemL subfamily. Homodimer. The cofactor is pyridoxal 5'-phosphate.

The protein localises to the cytoplasm. It carries out the reaction (S)-4-amino-5-oxopentanoate = 5-aminolevulinate. It participates in porphyrin-containing compound metabolism; protoporphyrin-IX biosynthesis; 5-aminolevulinate from L-glutamyl-tRNA(Glu): step 2/2. This chain is Glutamate-1-semialdehyde 2,1-aminomutase, found in Salmonella choleraesuis (strain SC-B67).